The chain runs to 274 residues: Formamidopyrimidine-DNA glycosylase (274 aa).

Pro-2 (schiff-base intermediate with DNA) is an active-site residue. Glu-3 (proton donor) is an active-site residue. Residue Lys-59 is the Proton donor; for beta-elimination activity of the active site. 3 residues coordinate DNA: His-93, Arg-112, and Lys-153. The segment at 238-272 (QVHTKFNKPCPNCGELIQKIKLGGRGTYFCKKCQQ) adopts an FPG-type zinc-finger fold. Arg-262 functions as the Proton donor; for delta-elimination activity in the catalytic mechanism.

This sequence belongs to the FPG family. Monomer. Zn(2+) is required as a cofactor.

It catalyses the reaction Hydrolysis of DNA containing ring-opened 7-methylguanine residues, releasing 2,6-diamino-4-hydroxy-5-(N-methyl)formamidopyrimidine.. The catalysed reaction is 2'-deoxyribonucleotide-(2'-deoxyribose 5'-phosphate)-2'-deoxyribonucleotide-DNA = a 3'-end 2'-deoxyribonucleotide-(2,3-dehydro-2,3-deoxyribose 5'-phosphate)-DNA + a 5'-end 5'-phospho-2'-deoxyribonucleoside-DNA + H(+). Involved in base excision repair of DNA damaged by oxidation or by mutagenic agents. Acts as a DNA glycosylase that recognizes and removes damaged bases. Has a preference for oxidized purines, such as 7,8-dihydro-8-oxoguanine (8-oxoG). Has AP (apurinic/apyrimidinic) lyase activity and introduces nicks in the DNA strand. Cleaves the DNA backbone by beta-delta elimination to generate a single-strand break at the site of the removed base with both 3'- and 5'-phosphates. The sequence is that of Formamidopyrimidine-DNA glycosylase from Mycoplasma mobile (strain ATCC 43663 / 163K / NCTC 11711) (Mesomycoplasma mobile).